We begin with the raw amino-acid sequence, 752 residues long: Coiled-coil domain-containing protein 157 (752 aa).

A compositionally biased stretch (polar residues) spans 135–154 (QQPLPQKGANQRETPTSKPT). Disordered stretches follow at residues 135 to 163 (QQPLPQKGANQRETPTSKPTTKGEPARSP) and 316 to 336 (QALKQEQGARRRQAEEDEQCL). 2 coiled-coil regions span residues 276–544 (AAEQ…LLVA) and 579–615 (DHMERQVQSNDIRIRVLQEENGRLQSMLSKIREVAQQ). Over residues 316–329 (QALKQEQGARRRQA) the composition is skewed to basic and acidic residues. 2 disordered regions span residues 620–707 (LIPQ…QPSK) and 731–752 (RKRLSPGRGQASSAHQPQERPM). Residues 628–648 (SPSSKGTQGATPPVQAKSTSP) are compositionally biased toward polar residues. The segment covering 671–692 (TSPPRQPCTSPPRQPCTSPPRQ) has biased composition (pro residues). Polar residues predominate over residues 693–707 (PCTSPSRQPCSQPSK).

In Homo sapiens (Human), this protein is Coiled-coil domain-containing protein 157 (CCDC157).